A 160-amino-acid polypeptide reads, in one-letter code: Small ribosomal subunit protein uS7A (160 aa).

This sequence belongs to the universal ribosomal protein uS7 family. In terms of assembly, part of the 30S ribosomal subunit. Contacts proteins S9 and S11.

In terms of biological role, one of the primary rRNA binding proteins, it binds directly to 16S rRNA where it nucleates assembly of the head domain of the 30S subunit. Is located at the subunit interface close to the decoding center, probably blocks exit of the E-site tRNA. The polypeptide is Small ribosomal subunit protein uS7A (Aquifex aeolicus (strain VF5)).